The chain runs to 118 residues: 5-hydroxyisourate hydrolase (118 aa).

Residues His7, Arg46, and Tyr115 each contribute to the substrate site.

The protein belongs to the transthyretin family. 5-hydroxyisourate hydrolase subfamily. As to quaternary structure, homotetramer.

It carries out the reaction 5-hydroxyisourate + H2O = 5-hydroxy-2-oxo-4-ureido-2,5-dihydro-1H-imidazole-5-carboxylate + H(+). In terms of biological role, catalyzes the hydrolysis of 5-hydroxyisourate (HIU) to 2-oxo-4-hydroxy-4-carboxy-5-ureidoimidazoline (OHCU). This is 5-hydroxyisourate hydrolase from Brucella melitensis biotype 1 (strain ATCC 23456 / CCUG 17765 / NCTC 10094 / 16M).